The following is a 167-amino-acid chain: Ureidoglycolate lyase (167 aa).

Belongs to the ureidoglycolate lyase family. As to quaternary structure, homodimer. It depends on Ni(2+) as a cofactor.

The enzyme catalyses (S)-ureidoglycolate = urea + glyoxylate. It functions in the pathway nitrogen metabolism; (S)-allantoin degradation. In terms of biological role, catalyzes the catabolism of the allantoin degradation intermediate (S)-ureidoglycolate, generating urea and glyoxylate. Involved in the utilization of allantoin as nitrogen source. This chain is Ureidoglycolate lyase, found in Pseudomonas putida (strain ATCC 700007 / DSM 6899 / JCM 31910 / BCRC 17059 / LMG 24140 / F1).